The following is a 475-amino-acid chain: Aspartyl/glutamyl-tRNA(Asn/Gln) amidotransferase subunit B (475 aa).

The protein belongs to the GatB/GatE family. GatB subfamily. As to quaternary structure, heterotrimer of A, B and C subunits.

It catalyses the reaction L-glutamyl-tRNA(Gln) + L-glutamine + ATP + H2O = L-glutaminyl-tRNA(Gln) + L-glutamate + ADP + phosphate + H(+). The enzyme catalyses L-aspartyl-tRNA(Asn) + L-glutamine + ATP + H2O = L-asparaginyl-tRNA(Asn) + L-glutamate + ADP + phosphate + 2 H(+). Allows the formation of correctly charged Asn-tRNA(Asn) or Gln-tRNA(Gln) through the transamidation of misacylated Asp-tRNA(Asn) or Glu-tRNA(Gln) in organisms which lack either or both of asparaginyl-tRNA or glutaminyl-tRNA synthetases. The reaction takes place in the presence of glutamine and ATP through an activated phospho-Asp-tRNA(Asn) or phospho-Glu-tRNA(Gln). The sequence is that of Aspartyl/glutamyl-tRNA(Asn/Gln) amidotransferase subunit B from Bacillus cereus (strain ZK / E33L).